Here is a 504-residue protein sequence, read N- to C-terminus: Glycerol kinase (504 aa).

Residue threonine 14 participates in ADP binding. Residues threonine 14, threonine 15, and serine 16 each contribute to the ATP site. Threonine 14 contributes to the sn-glycerol 3-phosphate binding site. Residue arginine 18 coordinates ADP. Residues arginine 84, glutamate 85, and tyrosine 136 each contribute to the sn-glycerol 3-phosphate site. Arginine 84, glutamate 85, and tyrosine 136 together coordinate glycerol. Histidine 232 carries the phosphohistidine; by HPr modification. Aspartate 246 lines the sn-glycerol 3-phosphate pocket. 2 residues coordinate glycerol: aspartate 246 and glutamine 247. The ADP site is built by threonine 268 and glycine 311. Residues threonine 268, glycine 311, glutamine 315, and glycine 412 each contribute to the ATP site. Positions 412 and 416 each coordinate ADP.

It belongs to the FGGY kinase family. Homotetramer and homodimer (in equilibrium). Post-translationally, the phosphoenolpyruvate-dependent sugar phosphotransferase system (PTS), including enzyme I, and histidine-containing protein (HPr) are required for the phosphorylation, which leads to the activation of the enzyme.

It catalyses the reaction glycerol + ATP = sn-glycerol 3-phosphate + ADP + H(+). Its pathway is polyol metabolism; glycerol degradation via glycerol kinase pathway; sn-glycerol 3-phosphate from glycerol: step 1/1. With respect to regulation, activated by phosphorylation and inhibited by fructose 1,6-bisphosphate (FBP). Functionally, key enzyme in the regulation of glycerol uptake and metabolism. Catalyzes the phosphorylation of glycerol to yield sn-glycerol 3-phosphate. The sequence is that of Glycerol kinase from Streptococcus pyogenes serotype M6 (strain ATCC BAA-946 / MGAS10394).